The primary structure comprises 323 residues: Beta-ketoacyl-[acyl-carrier-protein] synthase III (323 aa).

Active-site residues include Cys-113 and His-250. The ACP-binding stretch occupies residues 251 to 255; that stretch reads QANKR. Residue Asn-280 is part of the active site.

The protein belongs to the thiolase-like superfamily. FabH family. In terms of assembly, homodimer.

The protein localises to the cytoplasm. The catalysed reaction is malonyl-[ACP] + acetyl-CoA + H(+) = 3-oxobutanoyl-[ACP] + CO2 + CoA. Its pathway is lipid metabolism; fatty acid biosynthesis. Its function is as follows. Catalyzes the condensation reaction of fatty acid synthesis by the addition to an acyl acceptor of two carbons from malonyl-ACP. Catalyzes the first condensation reaction which initiates fatty acid synthesis and may therefore play a role in governing the total rate of fatty acid production. Possesses both acetoacetyl-ACP synthase and acetyl transacylase activities. Its substrate specificity determines the biosynthesis of branched-chain and/or straight-chain of fatty acids. This Agrobacterium fabrum (strain C58 / ATCC 33970) (Agrobacterium tumefaciens (strain C58)) protein is Beta-ketoacyl-[acyl-carrier-protein] synthase III.